The chain runs to 463 residues: Glycine--tRNA ligase (463 aa).

Arginine 98 and glutamate 174 together coordinate substrate. ATP contacts are provided by residues 206–208 (RNE), 216–221 (FRTREF), 290–291 (EL), and 334–337 (GADR). 221-225 (FEQME) provides a ligand contact to substrate. 330-334 (EPSLG) contributes to the substrate binding site.

Belongs to the class-II aminoacyl-tRNA synthetase family. In terms of assembly, homodimer.

It is found in the cytoplasm. The enzyme catalyses tRNA(Gly) + glycine + ATP = glycyl-tRNA(Gly) + AMP + diphosphate. Its function is as follows. Catalyzes the attachment of glycine to tRNA(Gly). This chain is Glycine--tRNA ligase, found in Staphylococcus epidermidis (strain ATCC 35984 / DSM 28319 / BCRC 17069 / CCUG 31568 / BM 3577 / RP62A).